Here is a 383-residue protein sequence, read N- to C-terminus: uncharacterized protein (383 aa).

Belongs to the peptidase M20 family.

This is an uncharacterized protein from Staphylococcus epidermidis (strain ATCC 12228 / FDA PCI 1200).